The following is a 415-amino-acid chain: Gamma-glutamyl phosphate reductase (415 aa).

This sequence belongs to the gamma-glutamyl phosphate reductase family.

Its subcellular location is the cytoplasm. It carries out the reaction L-glutamate 5-semialdehyde + phosphate + NADP(+) = L-glutamyl 5-phosphate + NADPH + H(+). Its pathway is amino-acid biosynthesis; L-proline biosynthesis; L-glutamate 5-semialdehyde from L-glutamate: step 2/2. Functionally, catalyzes the NADPH-dependent reduction of L-glutamate 5-phosphate into L-glutamate 5-semialdehyde and phosphate. The product spontaneously undergoes cyclization to form 1-pyrroline-5-carboxylate. This chain is Gamma-glutamyl phosphate reductase, found in Bacillus cereus (strain ZK / E33L).